The sequence spans 73 residues: Disintegrin molossin (73 aa).

The 73-residue stretch at 1–73 (EAGIECDCGS…ADCPRNRFHA (73 aa)) folds into the Disintegrin domain. 6 disulfides stabilise this stretch: C6-C21, C8-C16, C15-C38, C29-C35, C34-C59, and C47-C66. Positions 51 to 53 (RGD) match the Cell attachment site motif.

This sequence belongs to the venom metalloproteinase (M12B) family. P-II subfamily. P-IIa sub-subfamily. Monomer (disintegrin). Expressed by the venom gland.

It localises to the secreted. Its function is as follows. Inhibits fibrinogen interaction with platelets. Acts by binding to alpha-IIb/beta-3 (ITGA2B/ITGB3) on the platelet surface and inhibits aggregation induced by ADP, thrombin, platelet-activating factor and collagen. This Crotalus molossus molossus (Northern black-tailed rattlesnake) protein is Disintegrin molossin.